The following is a 370-amino-acid chain: Anhydro-N-acetylmuramic acid kinase (370 aa).

13–20 is an ATP binding site; that stretch reads GTSMDGVD.

This sequence belongs to the anhydro-N-acetylmuramic acid kinase family.

It catalyses the reaction 1,6-anhydro-N-acetyl-beta-muramate + ATP + H2O = N-acetyl-D-muramate 6-phosphate + ADP + H(+). The protein operates within amino-sugar metabolism; 1,6-anhydro-N-acetylmuramate degradation. Its pathway is cell wall biogenesis; peptidoglycan recycling. Functionally, catalyzes the specific phosphorylation of 1,6-anhydro-N-acetylmuramic acid (anhMurNAc) with the simultaneous cleavage of the 1,6-anhydro ring, generating MurNAc-6-P. Is required for the utilization of anhMurNAc either imported from the medium or derived from its own cell wall murein, and thus plays a role in cell wall recycling. The polypeptide is Anhydro-N-acetylmuramic acid kinase (Shewanella denitrificans (strain OS217 / ATCC BAA-1090 / DSM 15013)).